The following is a 234-amino-acid chain: Small ribosomal subunit protein uS2c (234 aa).

Belongs to the universal ribosomal protein uS2 family.

It is found in the plastid. The protein resides in the chloroplast. The polypeptide is Small ribosomal subunit protein uS2c (rps2) (Pinus koraiensis (Korean pine)).